The primary structure comprises 241 residues: MAAHSSCNFALTNPIISQIDSFSKKKLSVPLYFFSTRKALTNPWLGVVDSSLSLTSPVSALQTNRPRRIHKSAISSLPTANPDLVVSDAKKPKWSWRAIKSFAMGELEARKLKYPNTGTEALLMGILIEGTSFTSKFLRANKIMLYKVREETVKLLGKADMYFFSPEHPPLTEDAQRALDSALDQNLKAGGIGEVMPAHILLGIWSEVESPGHKILATLGFTDEKSKELESFASESGFLDE.

The N-terminal 75 residues, 1–75, are a transit peptide targeting the chloroplast; it reads MAAHSSCNFA…PRRIHKSAIS (75 aa). Positions 91 to 237 constitute a Clp R domain; the sequence is KPKWSWRAIK…ELESFASESG (147 aa). Repeat stretches follow at residues 94 to 159 and 171 to 237; these read WSWR…LGKA and LTED…SESG.

This sequence belongs to the ClpA/ClpB family. Monomer and homodimer. The dimers monomerize before association to the P-ring. Component of the chloroplastic Clp protease core complex which consist of at least 16 proteins: CLPP4 (3 copies), CLPP5 (3 copies), CLPR4 (2 copies), ClpP1 (1 copy), CLPP6 (1 copy), CLPR2 (1 copy), CLPT1 (1 copy), CLPT2 (1 copy) and 3 copies of CLPP3 and/or CLPR1 and/or CLPR3. Interacts with AHK2. Interacts with CPN21. No interactions with CLPS1.

Its subcellular location is the plastid. The protein localises to the chloroplast. Functionally, accessory protein regulating the assembly of the plastidial Clp protease system. CLPT1 first binds to the heptameric P-ring containing the CLP3-6 subunits followed by CLPT2, and only then does the P-ring combine with the R-ring composed of the clpP1 and CLPR1-4 subunits. Once the core complex is fully assembled, it then associates to the CLPC chaperone partner to form the functional protease. CLPT2 and CLPT1 are partially redundant. In Arabidopsis thaliana (Mouse-ear cress), this protein is ATP-dependent Clp protease ATP-binding subunit CLPT2, chloroplastic.